The following is a 104-amino-acid chain: Large ribosomal subunit protein bL21 (104 aa).

Belongs to the bacterial ribosomal protein bL21 family. As to quaternary structure, part of the 50S ribosomal subunit. Contacts protein L20.

Functionally, this protein binds to 23S rRNA in the presence of protein L20. The chain is Large ribosomal subunit protein bL21 from Alkalilimnicola ehrlichii (strain ATCC BAA-1101 / DSM 17681 / MLHE-1).